Reading from the N-terminus, the 979-residue chain is Glycine dehydrogenase (decarboxylating) (979 aa).

N6-(pyridoxal phosphate)lysine is present on Lys724.

Belongs to the GcvP family. As to quaternary structure, the glycine cleavage system is composed of four proteins: P, T, L and H. Requires pyridoxal 5'-phosphate as cofactor.

The enzyme catalyses N(6)-[(R)-lipoyl]-L-lysyl-[glycine-cleavage complex H protein] + glycine + H(+) = N(6)-[(R)-S(8)-aminomethyldihydrolipoyl]-L-lysyl-[glycine-cleavage complex H protein] + CO2. Functionally, the glycine cleavage system catalyzes the degradation of glycine. The P protein binds the alpha-amino group of glycine through its pyridoxal phosphate cofactor; CO(2) is released and the remaining methylamine moiety is then transferred to the lipoamide cofactor of the H protein. In Nostoc punctiforme (strain ATCC 29133 / PCC 73102), this protein is Glycine dehydrogenase (decarboxylating).